The chain runs to 558 residues: Membrane protein insertase YidC (558 aa).

Transmembrane regions (helical) follow at residues 6–26 (SFFI…WDDE), 359–379 (FIHT…TVII), 434–454 (LGGC…YYML), 480–500 (ILPI…PTTI), and 513–533 (LVIF…YYII).

Belongs to the OXA1/ALB3/YidC family. Type 1 subfamily. As to quaternary structure, interacts with the Sec translocase complex via SecD. Specifically interacts with transmembrane segments of nascent integral membrane proteins during membrane integration.

The protein localises to the cell inner membrane. In terms of biological role, required for the insertion and/or proper folding and/or complex formation of integral membrane proteins into the membrane. Involved in integration of membrane proteins that insert both dependently and independently of the Sec translocase complex, as well as at least some lipoproteins. Aids folding of multispanning membrane proteins. This Blochmanniella floridana protein is Membrane protein insertase YidC.